The following is a 29-amino-acid chain: Glucagon (29 aa).

Ser-2 carries the phosphoserine modification.

Belongs to the glucagon family.

Its subcellular location is the secreted. Its function is as follows. Glucagon plays a key role in glucose metabolism and homeostasis. Regulates blood glucose by increasing gluconeogenesis and decreasing glycolysis. The sequence is that of Glucagon (GCG) from Chinchilla chinchilla (Short-tailed chinchilla).